The chain runs to 1873 residues: SAGA complex subunit Spt20 (1873 aa).

The protein belongs to the SPT20 family. In terms of assembly, component of the Spt-Ada-Gcn5 acetyltransferase (SAGA) complex consisting of wda/Taf5L, Saf6, Taf9, Taf10b, Taf12, Ada1, Spt3, Spt7, Spt20, Sf3b3, Sf3b5, Nipped-A/Tra1, a histone acetyltransferase (HAT) module made up of Gcn5, Ada2b (Isoform B), Ada3 and Sgf29, and a deubiquitinase (DUB) module made up of not/nonstop, Sgf11 and e(y)2 tethered to SAGA by Atxn7.

The protein localises to the nucleus. Component of the transcription regulatory complex SAGA, a multiprotein complex that activates transcription by remodeling chromatin and mediating histone acetylation and deubiquitination. The SAGA complex predominantly acetylates histone H3. The polypeptide is SAGA complex subunit Spt20 (Drosophila melanogaster (Fruit fly)).